A 1118-amino-acid polypeptide reads, in one-letter code: Collagenase ColG (1118 aa).

Residues 1-45 (MKKNILKILMDSYSKESKIQTVRRVTSVSLLAVYLTMNTSSLVLA) form the signal peptide. Residues 46–110 (KPIENTNDTS…KSKSTLRSAS (65 aa)) constitute a propeptide that is removed on maturation. The interval 111–786 (IANTNSEKYD…QYDVVFHGVL (676 aa)) is S1 metalloprotease domain, degrades both FALGPA (furylacryloyl-Leu-Gly-Pro-Ala) and type I collagen. The activator domain required for full activity on collagen stretch occupies residues 119 to 388 (YDFEYLNGLS…AMERITWDYD (270 aa)). A catalytic subdomain region spans residues 389-670 (GIGSNGKKVD…IQELADKYQG (282 aa)). The degrades soluble FALGPA peptide (furylacryloyl-Leu-Gly-Pro-Ala) but not type I collagen stretch occupies residues 396 to 1118 (KVDHDKFLDD…SGNYELRVNK (723 aa)). Glutamate 498 lines the Ca(2+) pocket. A Zn(2+)-binding site is contributed by histidine 523. The active site involves glutamate 524. Residue histidine 527 participates in Zn(2+) binding. The Ca(2+) site is built by alanine 531, valine 535, and glycine 537. Zn(2+) is bound at residue glutamate 555. A helper subdomain region spans residues 679-790 (DYLKDHGYKK…VFHGVLTDNA (112 aa)). The S2 domain stretch occupies residues 787–882 (TDNADISNNK…SFTIEIKNED (96 aa)). The Ca(2+) site is built by asparagine 795, lysine 796, aspartate 823, aspartate 825, aspartate 864, glutamate 890, glutamate 892, asparagine 894, aspartate 913, aspartate 918, alanine 920, aspartate 921, glutamate 1009, glutamate 1011, asparagine 1013, aspartate 1014, serine 1032, aspartate 1037, arginine 1039, and aspartate 1040. The PKD domain occupies 797–885 (APIAKVTGPS…IEIKNEDTTT (89 aa)). Residues 886 to 1003 (PITKEMEPND…SYSLNIKGLG (118 aa)) form an S3a collagen-binding domain region. Residues 1008–1118 (KEKENNDSSD…SGNYELRVNK (111 aa)) are S3b collagen-binding domain. Positions 1102-1106 (LVYKY) are collagen-binding.

The protein belongs to the peptidase M9B family. Collagenase subfamily. Ca(2+) serves as cofactor. It depends on Zn(2+) as a cofactor. Upon purification gives 67 kDa, 78 kDa, 82 kDa and 116 kDa (full-length) proteins all of which have the same N-terminus; only the longest form digests insoluble collagen. At least 2 in vivo isolated forms (C1b and C1c) are missing the second collagen-binding domain, ending on Lys-1006 and Lys-1018 respectively.

It is found in the secreted. It carries out the reaction Digestion of native collagen in the triple helical region at Xaa-|-Gly bonds. With synthetic peptides, a preference is shown for Gly at P3 and P1', Pro and Ala at P2 and P2', and hydroxyproline, Ala or Arg at P3'.. With respect to regulation, inhibited by 1-10-phenanthroline. Inhibited by peptidomimetic isoamyl-phosphonyl-Gly-Pro-Ala, which binds to Zn(2+). Inhibited by broad-spectrum zinc metalloprotease inhibitor batimastat. N-aryl mercaptoacetamide-based inhibitors have been isolated that act on clostridial collagenases with submicromolar affinity while having negligibile activity on human collagenases. Clostridial collagenases are among the most efficient degraders of eukaryotic collagen known; saprophytes use collagen as a carbon source while pathogens additionally digest collagen to aid in host colonization. Has both tripeptidylcarboxypeptidase on Gly-X-Y and endopeptidase activities; the endopeptidase cuts within the triple helix region of collagen while tripeptidylcarboxypeptidase successively digests the exposed ends, thus clostridial collagenases can digest large sections of collagen. Active on soluble type I collagen, insoluble collagen, azocoll, soluble PZ-peptide (all collagenase substrates) and gelatin. The full-length protein has collagenase activity, while the in vivo derived C-terminally truncated shorter versions only act on gelatin. In vitro digestion of soluble calf skin collagen fibrils requires both ColG and ColH; ColG forms missing the second collagen-binding domain are also synergistic with ColH, although their overall efficiency is decreased. The activator domain (residues 119-388) and catalytic subdomain (389-670) open and close around substrate using a Gly-rich hinge (387-397), allowing digestion when the protein is closed. Binding of collagen requires Ca(2+) and is inhibited by EGTA; the collagen-binding domain (CBD, S3a plus S3b) specifically recognizes the triple-helical conformation made by 3 collagen protein chains in the triple-helical region. Isolated CBD (S3a plus S3b) binds collagen fibrils and sheets of many tissues. The protein is Collagenase ColG of Hathewaya histolytica (Clostridium histolyticum).